Here is a 101-residue protein sequence, read N- to C-terminus: Small ribosomal subunit protein bS6 (101 aa).

Belongs to the bacterial ribosomal protein bS6 family.

Its function is as follows. Binds together with bS18 to 16S ribosomal RNA. This is Small ribosomal subunit protein bS6 from Nitratidesulfovibrio vulgaris (strain DSM 19637 / Miyazaki F) (Desulfovibrio vulgaris).